The primary structure comprises 823 residues: MGKKRTKGKTVPIDDSSETLEPVCRHIRKGLEQGNLKKALVNVEWNICQDCKTDNKVKDKAEEETEEKPSVWLCLKCGHQGCGRNSQEQHALKHYLTPRSEPHCLVLSLDNWSVWCYVCDNEVQYCSSNQLGQVVDYVRKQASITTPKPAEKDNGNIELENKKLEKESKNEQEREKKENMAKENPPMNSPCQITVKGLSNLGNTCFFNAVMQNLSQTPVLRELLKEVKMSGTIVKIEPPDLALTEPLEINLEPPGPLTLAMSQFLNEMQETKKGVVTPKELFSQVCKKAVRFKGYQQQDSQELLRYLLDGMRAEEHQRVSKGILKAFGNSTEKLDEELKNKVKDYEKKKSMPSFVDRIFGGELTSMIMCDQCRTVSLVHESFLDLSLPVLDDQSGKKSVNDKNLKKTVEDEDQDSEEEKDNDSYIKERSDIPSGTSKHLQKKAKKQAKKQAKNQRRQQKIQGKVLHLNDICTIDHPEDSEYEAEMSLQGEVNIKSNHISQEGVMHKEYCVNQKDLNGQAKMIESVTDNQKSTEEVDMKNINMDNDLEVLTSSPTRNLNGAYLTEGSNGEVDISNGFKNLNLNAALHPDEINIEILNDSHTPGTKVYEVVNEDPETAFCTLANREVFNTDECSIQHCLYQFTRNEKLRDANKLLCEVCTRRQCNGPKANIKGERKHVYTNAKKQMLISLAPPVLTLHLKRFQQAGFNLRKVNKHIKFPEILDLAPFCTLKCKNVAEENTRVLYSLYGVVEHSGTMRSGHYTAYAKARTANSHLSNLVLHGDIPQDFEMESKGQWFHISDTHVQAVPTTKVLNSQAYLLFYERIL.

The UBP-type zinc-finger motif lies at 22 to 142 (PVCRHIRKGL…QVVDYVRKQA (121 aa)). Zn(2+) is bound by residues C24, H26, C48, C51, C74, C77, C82, H90, H94, H103, C116, and C119. A Glycyl lysine isopeptide (Lys-Gly) (interchain with G-Cter in SUMO2) cross-link involves residue K140. The tract at residues 146 to 189 (TPKPAEKDNGNIELENKKLEKESKNEQEREKKENMAKENPPMNS) is disordered. The span at 149–181 (PAEKDNGNIELENKKLEKESKNEQEREKKENMA) shows a compositional bias: basic and acidic residues. A Phosphoserine modification is found at S189. Residues 196 to 822 (KGLSNLGNTC…QAYLLFYERI (627 aa)) form the USP domain. The Nucleophile role is filled by C205. Residues 394–408 (SGKKSVNDKNLKKTV) are compositionally biased toward basic and acidic residues. A disordered region spans residues 394–460 (SGKKSVNDKN…AKNQRRQQKI (67 aa)). A compositionally biased stretch (acidic residues) spans 409–420 (EDEDQDSEEEKD). Residue S415 is modified to Phosphoserine. Positions 421–430 (NDSYIKERSD) are enriched in basic and acidic residues. Basic residues predominate over residues 438 to 458 (HLQKKAKKQAKKQAKNQRRQQ). Phosphoserine is present on residues S531 and S552. T554 carries the phosphothreonine modification. H758 (proton acceptor) is an active-site residue.

This sequence belongs to the peptidase C19 family. USP16 subfamily. Homotetramer. Associates with late pre-40S ribosomes. Interacts with CEP78; promoting deubiquitination of tektins. In terms of processing, phosphorylated at the onset of mitosis and dephosphorylated during the metaphase/anaphase transition. Phosphorylation by AURKB enhances the deubiquitinase activity. Present in all the tissues examined including fetal brain, lung, liver, kidney, and adult heart, brain, placenta, lung, liver, skeletal muscle, kidney and pancreas.

The protein resides in the nucleus. It localises to the cytoplasm. The catalysed reaction is Thiol-dependent hydrolysis of ester, thioester, amide, peptide and isopeptide bonds formed by the C-terminal Gly of ubiquitin (a 76-residue protein attached to proteins as an intracellular targeting signal).. Its function is as follows. Specifically deubiquitinates 'Lys-120' of histone H2A (H2AK119Ub), a specific tag for epigenetic transcriptional repression, thereby acting as a coactivator. Deubiquitination of histone H2A is a prerequisite for subsequent phosphorylation at 'Ser-11' of histone H3 (H3S10ph), and is required for chromosome segregation when cells enter into mitosis. In resting B- and T-lymphocytes, phosphorylation by AURKB leads to enhance its activity, thereby maintaining transcription in resting lymphocytes. Regulates Hox gene expression via histone H2A deubiquitination. Prefers nucleosomal substrates. Does not deubiquitinate histone H2B. Also deubiquitinates non-histone proteins, such as ribosomal protein RPS27A: deubiquitination of monoubiquitinated RPS27A promotes maturation of the 40S ribosomal subunit. Also mediates deubiquitination of tektin proteins (TEKT1, TEKT2, TEK3, TEKT4 and TEKT5), promoting their stability. The polypeptide is Ubiquitin carboxyl-terminal hydrolase 16 (Homo sapiens (Human)).